The primary structure comprises 107 residues: Nucleoid-associated protein A1G_07310 (107 aa).

The protein belongs to the YbaB/EbfC family. As to quaternary structure, homodimer.

The protein localises to the cytoplasm. Its subcellular location is the nucleoid. In terms of biological role, binds to DNA and alters its conformation. May be involved in regulation of gene expression, nucleoid organization and DNA protection. The polypeptide is Nucleoid-associated protein A1G_07310 (Rickettsia rickettsii (strain Sheila Smith)).